The chain runs to 238 residues: MGRGKVELKRIENKINRQVTFAKRRNGLLKKAYELSILCEAEVALIIFSNRGKLYEFCSTSSMSDTLERYHRCSYGDLETGQSSKDSQNNYQEYMKLKARVEVLQQSQRHILGEDLGQLNTKDLEQLERQLDSSLRLIRSRRTQNMLDQLSDLQQKEQSLLEINRSLKTKLEENSVAHWHITGEQNVQFRQQPAQSEGFFQPLQCNTNIVPNRYNVAPLDSIEPSTQNATGILPGWML.

The MADS-box domain occupies 1–61 (MGRGKVELKR…GKLYEFCSTS (61 aa)). In terms of domain architecture, K-box spans 87–177 (SQNNYQEYMK…KTKLEENSVA (91 aa)).

The protein resides in the nucleus. Its function is as follows. Probable MADS-box transcription factor that functions with J2 and EJ2 in meristem maturation. The chain is MADS-box protein 04g005320 from Solanum lycopersicum (Tomato).